Reading from the N-terminus, the 394-residue chain is Olfactomedin-like protein 3B (394 aa).

The N-terminal stretch at 1-18 (MKATIFFLLLTVLAHSRS) is a signal peptide. The stretch at 29-94 (LENRMLAMEE…RVDRVEREMD (66 aa)) forms a coiled coil. The Olfactomedin-like domain occupies 132–383 (VCVNIISSLK…QILYKLELKK (252 aa)). A disulfide bond links Cys-133 and Cys-310. 3 N-linked (GlcNAc...) asparagine glycosylation sites follow: Asn-169, Asn-204, and Asn-233.

This sequence belongs to the OLFML3 family.

Its subcellular location is the secreted. Secreted scaffold protein that plays an essential role in dorsoventral patterning during early development. Stabilizes axial formation by restricting chordin (CHRD) activity on the dorsal side. Acts by facilitating the association between the tolloid proteases and their substrate chordin (CHRD), leading to enhance chordin (CHRD) degradation. This Danio rerio (Zebrafish) protein is Olfactomedin-like protein 3B (olfml3b).